Reading from the N-terminus, the 516-residue chain is Propionyl-CoA carboxylase, carboxyltransferase subunit (516 aa).

Positions 1–32 (MTMEDRIDELREKREEALKGGGEDRIASQHDK) are disordered. A CoA carboxyltransferase N-terminal domain is found at 3–259 (MEDRIDELRE…NNVEDPPRVE (257 aa)). Residues 263 to 509 (DPERVADELE…KSKRKSQPDK (247 aa)) form the CoA carboxyltransferase C-terminal domain.

Belongs to the AccD/PCCB family. The propionyl coenzyme A carboxylase (PCC) complex is composed of three subunits: PccA (biotin carboxylase and biotin-carboxyl carrier), PccB (carboxyltransferase) and PccX.

The catalysed reaction is propanoyl-CoA + hydrogencarbonate + ATP = (S)-methylmalonyl-CoA + ADP + phosphate + H(+). The protein operates within metabolic intermediate metabolism; propanoyl-CoA degradation; succinyl-CoA from propanoyl-CoA: step 1/3. Part of the propionyl coenzyme A carboxylase (PCC) complex involved in propionate utilization and in the production of the poly(3-hydroxybutyrate-co-3-hydroxyvalerate)(PHBV), which is a water-insoluble biopolymer used as intracellular energy reserve material when cells grow under conditions of nutrient limitation. The complex catalyzes the carboxylation of propionyl-CoA to methylmalonyl-CoA. PCC is also able to catalyze the carboxylation of acetyl-CoA. This is Propionyl-CoA carboxylase, carboxyltransferase subunit from Haloferax mediterranei (strain ATCC 33500 / DSM 1411 / JCM 8866 / NBRC 14739 / NCIMB 2177 / R-4) (Halobacterium mediterranei).